The primary structure comprises 761 residues: Spindle assembly abnormal protein 4 (761 aa).

Residues M1–Q11 show a composition bias toward acidic residues. Residues M1 to V109 are disordered. Positions T51 to T62 are enriched in polar residues. Basic and acidic residues predominate over residues E90–E106. The stretch at E129–N156 forms a coiled coil. Positions T164–S173 are enriched in low complexity. 2 disordered regions span residues T164–P228 and P252–V280. Residues Q210–T223 show a composition bias toward polar residues. Basic and acidic residues predominate over residues S265 to V280. The stretch at R326–F464 forms a coiled coil. Residues A479–S497 are compositionally biased toward low complexity. A disordered region spans residues A479–S510.

It is found in the cytoplasm. Its subcellular location is the cytoskeleton. It localises to the microtubule organizing center. The protein localises to the centrosome. In terms of biological role, required for centrosome duplication. Plays a central role in determining centrosome size. This is Spindle assembly abnormal protein 4 (sas-4) from Caenorhabditis briggsae.